The chain runs to 188 residues: Large ribosomal subunit protein eL18 (188 aa).

Residue K119 forms a Glycyl lysine isopeptide (Lys-Gly) (interchain with G-Cter in SUMO2) linkage. Position 130 is a phosphoserine (S130). Residues 150–188 (RHFGKAPGTPHSHTKPYVRSKGRKFERARGRRASRGYKN) are disordered. At T158 the chain carries Phosphothreonine. Basic residues-rich tracts occupy residues 161–171 (SHTKPYVRSKG) and 178–188 (RGRRASRGYKN). Residue K164 forms a Glycyl lysine isopeptide (Lys-Gly) (interchain with G-Cter in SUMO2) linkage.

The protein belongs to the eukaryotic ribosomal protein eL18 family. Component of the large ribosomal subunit.

Its subcellular location is the cytoplasm. It localises to the cytosol. The protein resides in the rough endoplasmic reticulum. Component of the large ribosomal subunit. The ribosome is a large ribonucleoprotein complex responsible for the synthesis of proteins in the cell. This Rattus norvegicus (Rat) protein is Large ribosomal subunit protein eL18 (Rpl18).